Reading from the N-terminus, the 123-residue chain is Pre-B lymphocyte protein 3 (123 aa).

An N-terminal signal peptide occupies residues 1–20 (MACRCLSFLLMGTFLSVSQT). Positions 21 to 123 (VLAQLDALLV…YCSVGYGFSP (103 aa)) constitute an Ig-like domain. An intrachain disulfide couples cysteine 40 to cysteine 115.

It belongs to the immunoglobulin superfamily. As to expression, expressed in B-cell precursors. Expressed in fetal liver, bone marrow, spleen and lymph node.

Functionally, associates with the Ig-mu chain to form a molecular complex that is expressed on the surface of pre-B-cells. This Homo sapiens (Human) protein is Pre-B lymphocyte protein 3 (VPREB3).